A 451-amino-acid chain; its full sequence is Cyclin-dependent kinase 18 (451 aa).

The tract at residues 39-61 is disordered; sequence RNEDGRDEPGQLSPGVQYQQRQN. Residue serine 51 is modified to Phosphoserine. Over residues 52–61 the composition is skewed to polar residues; the sequence is PGVQYQQRQN. Phosphoserine occurs at positions 66 and 109. Positions 121–402 constitute a Protein kinase domain; that stretch reads YVKLDKLGEG…AEAALSHPYF (282 aa). ATP-binding positions include 127–135 and lysine 150; that span reads LGEGTYATV. The active-site Proton acceptor is aspartate 242. 2 positions are modified to phosphoserine: serine 417 and serine 420.

The protein belongs to the protein kinase superfamily. CMGC Ser/Thr protein kinase family. CDC2/CDKX subfamily. As to expression, in brain, kidney, intestine and at a much lower level, in fetal tissues.

It carries out the reaction L-seryl-[protein] + ATP = O-phospho-L-seryl-[protein] + ADP + H(+). The catalysed reaction is L-threonyl-[protein] + ATP = O-phospho-L-threonyl-[protein] + ADP + H(+). May play a role in signal transduction cascades in terminally differentiated cells. This Rattus norvegicus (Rat) protein is Cyclin-dependent kinase 18 (Cdk18).